The primary structure comprises 655 residues: Endoplasmic reticulum chaperone BiP (655 aa).

The signal sequence occupies residues 1-19 (MMKFTVVAAALLLLGAVRA). Positions 1–81 (MMKFTVVAAA…EGERLIGDAA (81 aa)) are required for interaction with ELAPOR1. Residue 37–40 (GTTY) coordinates ATP. Serine 87 carries the phosphoserine modification. Lysine 97 is a binding site for ATP. Lysine 126 carries the post-translational modification N6-acetyllysine. The interval 126-281 (KPYIQVDIGG…KKKTGKDVRK (156 aa)) is nucleotide-binding (NBD). Position 161 is a 3'-nitrotyrosine (tyrosine 161). At lysine 214 the chain carries N6-acetyllysine. 228 to 230 (GGT) is an ATP binding site. An N6-acetyllysine modification is found at lysine 272. 294–301 (EKAKRALS) lines the ATP pocket. Position 327 is an N6-acetyllysine (lysine 327). Residue lysine 353 forms a Glycyl lysine isopeptide (Lys-Gly) (interchain with G-Cter in SUMO2) linkage. An N6-acetyllysine; alternate modification is found at lysine 354. A Glycyl lysine isopeptide (Lys-Gly) (interchain with G-Cter in SUMO1); alternate cross-link involves residue lysine 354. 365–368 (GSTR) lines the ATP pocket. The interval 410-420 (QDTGDLVLLDV) is interdomain linker. The segment at 421–501 (CPLTLGIETV…PRGVPQIEVT (81 aa)) is substrate-binding (SBD). The residue at position 448 (lysine 448) is an N6-succinyllysine. At arginine 493 the chain carries Omega-N-methylarginine. The residue at position 519 (threonine 519) is an O-AMP-threonine; alternate. Threonine 519 carries the phosphothreonine; alternate modification. Lysine 586 bears the N6,N6,N6-trimethyllysine; by METTL21A; in vitro mark. At lysine 586 the chain carries N6,N6-dimethyllysine; alternate. Residue lysine 586 is modified to N6-methyllysine; alternate. Lysine 592 carries the post-translational modification N6-methyllysine. Residues 632 to 655 (ISKLYGSGGPPPTGEEDTSEKDEL) form a disordered region. Phosphothreonine is present on residues threonine 644 and threonine 649. Positions 645 to 655 (GEEDTSEKDEL) are enriched in acidic residues. Serine 650 is subject to Phosphoserine. The Prevents secretion from ER motif lies at 652–655 (KDEL).

The protein belongs to the heat shock protein 70 family. As to quaternary structure, monomer and homooligomer; homooligomerization via the interdomain linker inactivates the chaperone activity and acts as a storage of HSPA5/BiP molecules. Interacts with DNAJC1 (via J domain). Component of an EIF2 complex at least composed of CELF1/CUGBP1, CALR, CALR3, EIF2S1, EIF2S2, HSP90B1 and HSPA5. Part of a large chaperone multiprotein complex comprising DNAJB11, HSP90B1, HSPA5, HYOU, PDIA2, PDIA4, PDIA6, PPIB, SDF2L1, UGGT1 and very small amounts of ERP29, but not, or at very low levels, CALR nor CANX. Interacts with TMEM132A and TRIM21. May form a complex with ERLEC1, OS9, SEL1L and SYVN1. Interacts with DNAJC10. Interacts with DNAJB9/ERdj4; leading to recruit HSPA5/BiP to ERN1/IRE1. Interacts with ERN1/IRE1 (via luminal domain); the interaction takes place following interaction with DNAJB9/ERdj4 and leads to inactivate ERN1/IRE1, the interaction also competitively inhibits ERN1 interaction with MANF. Interacts directly with MANF (via SAP domain); the interaction inhibits ATP binding to HSPA5/BiP and subsequent nucleotide exchange. Interacts with ERN1 (via luminal domain); the interaction competitively inhibits ERN1 interaction with MANF. Interacts with EIF2AK3/PERK (via luminal domain); interaction leads to inactivate EIF2AK3/PERK. Interacts with MX1. Interacts with METTL23. Interacts with CEMIP; the interaction induces calcium leakage from the endoplasmic reticulum and cell migration. Interacts with PCSK4 form; the interaction takes place in the endoplasmic reticulum. Interacts with CIPC. Interacts with CCDC88B (via C-terminus); the interaction opposes ERN1-mediated JNK activation, protecting against apoptosis. Interacts with INPP5K; necessary for INPP5K localization at the endoplasmic reticulum. Interacts with MANF; the interaction is direct. Interacts with LOXL2; leading to activate the ERN1/IRE1-XBP1 pathway of the unfolded protein response. Interacts with CLU under stressed condition; interaction increases CLU protein stability; facilitates its retrotranslocation and redistribution to the mitochondria; cooperatively suppress stress-induced apoptosis by stabilizing mitochondrial membrane integrity. Interacts with CCDC47. Interacts with CLN3. Interacts with ELAPOR1; may regulate the function of HSPA5 in apoptosis and cell proliferation. Interacts with CASP7. Interacts with ILDR2; the interaction stabilizes ILDR2 expression. Interacts with ADAM7. In terms of processing, in unstressed cells, AMPylation at Thr-519 by FICD inactivates the chaperome activity: AMPylated form is locked in a relatively inert state and only weakly stimulated by J domain-containing proteins. In response to endoplasmic reticulum stress, de-AMPylation by the same protein, FICD, restores the chaperone activity. In terms of tissue distribution, expressed in sperm (at protein level).

The protein resides in the endoplasmic reticulum lumen. Its subcellular location is the melanosome. It is found in the cytoplasm. The protein localises to the cell surface. The catalysed reaction is ATP + H2O = ADP + phosphate + H(+). With respect to regulation, the chaperone activity is regulated by ATP-induced allosteric coupling of the nucleotide-binding (NBD) and substrate-binding (SBD) domains. In the ADP-bound and nucleotide-free (apo) states, the two domains have little interaction. In contrast, in the ATP-bound state the two domains are tightly coupled, which results in drastically accelerated kinetics in both binding and release of polypeptide substrates. J domain-containing co-chaperones (DNAJB9/ERdj4 or DNAJC10/ERdj5) stimulate the ATPase activity and are required for efficient substrate recognition by HSPA5/BiP. Homooligomerization inactivates participating HSPA5/BiP protomers and probably act as reservoirs to store HSPA5/BiP molecules when they are not needed by the cell. In terms of biological role, endoplasmic reticulum chaperone that plays a key role in protein folding and quality control in the endoplasmic reticulum lumen. Involved in the correct folding of proteins and degradation of misfolded proteins via its interaction with DNAJC10/ERdj5, probably to facilitate the release of DNAJC10/ERdj5 from its substrate. Acts as a key repressor of the EIF2AK3/PERK and ERN1/IRE1-mediated unfolded protein response (UPR). In the unstressed endoplasmic reticulum, recruited by DNAJB9/ERdj4 to the luminal region of ERN1/IRE1, leading to disrupt the dimerization of ERN1/IRE1, thereby inactivating ERN1/IRE1. Also binds and inactivates EIF2AK3/PERK in unstressed cells. Accumulation of misfolded protein in the endoplasmic reticulum causes release of HSPA5/BiP from ERN1/IRE1 and EIF2AK3/PERK, allowing their homodimerization and subsequent activation. Plays an auxiliary role in post-translational transport of small presecretory proteins across endoplasmic reticulum (ER). May function as an allosteric modulator for SEC61 channel-forming translocon complex, likely cooperating with SEC62 to enable the productive insertion of these precursors into SEC61 channel. Appears to specifically regulate translocation of precursors having inhibitory residues in their mature region that weaken channel gating. May also play a role in apoptosis and cell proliferation. This chain is Endoplasmic reticulum chaperone BiP, found in Mus musculus (Mouse).